The sequence spans 82 residues: Large ribosomal subunit protein bL31 (82 aa).

Zn(2+)-binding residues include cysteine 16, cysteine 18, cysteine 37, and cysteine 40.

The protein belongs to the bacterial ribosomal protein bL31 family. Type A subfamily. In terms of assembly, part of the 50S ribosomal subunit. Zn(2+) is required as a cofactor.

In terms of biological role, binds the 23S rRNA. This chain is Large ribosomal subunit protein bL31, found in Blochmanniella pennsylvanica (strain BPEN).